The primary structure comprises 452 residues: Ribosomal protein uS12 methylthiotransferase RimO (452 aa).

Residues 5-116 (PTIAFSHLGC…IVDVLQRTES (112 aa)) enclose the MTTase N-terminal domain. [4Fe-4S] cluster contacts are provided by C14, C50, C79, C154, C158, and C161. The 230-residue stretch at 140 to 369 (TTTSAVAYLR…MATQQPIAER (230 aa)) folds into the Radical SAM core domain. The region spanning 372–438 (RAQIGRLVDV…IYDLHGEVAS (67 aa)) is the TRAM domain.

Belongs to the methylthiotransferase family. RimO subfamily. [4Fe-4S] cluster is required as a cofactor.

It localises to the cytoplasm. It carries out the reaction L-aspartate(89)-[ribosomal protein uS12]-hydrogen + (sulfur carrier)-SH + AH2 + 2 S-adenosyl-L-methionine = 3-methylsulfanyl-L-aspartate(89)-[ribosomal protein uS12]-hydrogen + (sulfur carrier)-H + 5'-deoxyadenosine + L-methionine + A + S-adenosyl-L-homocysteine + 2 H(+). In terms of biological role, catalyzes the methylthiolation of an aspartic acid residue of ribosomal protein uS12. This chain is Ribosomal protein uS12 methylthiotransferase RimO, found in Synechococcus sp. (strain ATCC 27144 / PCC 6301 / SAUG 1402/1) (Anacystis nidulans).